The following is a 354-amino-acid chain: Protein RecA (354 aa).

Gly-67–Thr-74 contributes to the ATP binding site.

It belongs to the RecA family.

The protein localises to the cytoplasm. Can catalyze the hydrolysis of ATP in the presence of single-stranded DNA, the ATP-dependent uptake of single-stranded DNA by duplex DNA, and the ATP-dependent hybridization of homologous single-stranded DNAs. It interacts with LexA causing its activation and leading to its autocatalytic cleavage. The polypeptide is Protein RecA (Pasteurella multocida (strain Pm70)).